The sequence spans 501 residues: U6 snRNA (guanine-N(2))-methyltransferase THUMPD2 (501 aa).

The region spanning 149–264 (TEQIQELQET…DVYSVLGIPV (116 aa)) is the THUMP domain. Residues 414 to 469 (LKGGEASSGPLNSQGGHTEEPGGEERLTPAEKAAVSEPVSSPFAASNQGRLDRMPP) form a disordered region. Over residues 430–442 (HTEEPGGEERLTP) the composition is skewed to basic and acidic residues.

It belongs to the methyltransferase superfamily. As to quaternary structure, part of the heterodimeric THUMPD2-TRM112 methyltransferase complex; this complex forms an active tRNA methyltransferase, where TRMT112 acts as an activator of the catalytic subunit THUMPD2.

The protein localises to the nucleus. The enzyme catalyses guanosine in U6 snRNA + S-adenosyl-L-methionine = N(2)-methylguanosine in U6 snRNA + S-adenosyl-L-homocysteine + H(+). Catalytic subunit of the THUMPD2-TRM112 methyltransferase complex, that specifically mediates the S-adenosyl-L-methionine-dependent N(2)-methylation of guanosine nucleotides, most probably at position 72 (m2G72), in the U6snRNA of the major spliceosome. This modification in the U6 snRNA affects the constitutive splicing efficiency of introns that have suboptimal splice sites and can impact final mRNA levels. The chain is U6 snRNA (guanine-N(2))-methyltransferase THUMPD2 from Bos taurus (Bovine).